The primary structure comprises 409 residues: Phosphatidylserine decarboxylase proenzyme, mitochondrial (409 aa).

The N-terminal 52 residues, 1–52 (MATSVGHRCLGLLHGVAPWRSSLHPCEITALSQSLQPLRKLPFRAFRTDARK), are a transit peptide targeting the mitochondrion. The Mitochondrial matrix portion of the chain corresponds to 53–63 (IHTAPARTMFL). The chain crosses the membrane as a helical span at residues 64–82 (LRPVPILLATGGGYAGYRQ). The Mitochondrial intermembrane segment spans residues 83-409 (YEKYRERELE…IRFGEALGSL (327 aa)). Catalysis depends on charge relay system; for autoendoproteolytic cleavage activity residues aspartate 191, histidine 267, and serine 378. Residue serine 378 is the Schiff-base intermediate with substrate; via pyruvic acid; for decarboxylase activity of the active site. Serine 378 bears the Pyruvic acid (Ser); by autocatalysis mark.

Belongs to the phosphatidylserine decarboxylase family. PSD-B subfamily. Eukaryotic type I sub-subfamily. In terms of assembly, heterodimer of a large membrane-associated beta subunit and a small pyruvoyl-containing alpha subunit. It depends on pyruvate as a cofactor. Is synthesized initially as an inactive proenzyme. Formation of the active enzyme involves a self-maturation process in which the active site pyruvoyl group is generated from an internal serine residue via an autocatalytic post-translational modification. Two non-identical subunits are generated from the proenzyme in this reaction, and the pyruvate is formed at the N-terminus of the alpha chain, which is derived from the carboxyl end of the proenzyme. The autoendoproteolytic cleavage occurs by a canonical serine protease mechanism, in which the side chain hydroxyl group of the serine supplies its oxygen atom to form the C-terminus of the beta chain, while the remainder of the serine residue undergoes an oxidative deamination to produce ammonia and the pyruvoyl prosthetic group on the alpha chain. During this reaction, the Ser that is part of the protease active site of the proenzyme becomes the pyruvoyl prosthetic group, which constitutes an essential element of the active site of the mature decarboxylase.

It localises to the mitochondrion inner membrane. Its subcellular location is the lipid droplet. The protein resides in the cytoplasm. The enzyme catalyses a 1,2-diacyl-sn-glycero-3-phospho-L-serine + H(+) = a 1,2-diacyl-sn-glycero-3-phosphoethanolamine + CO2. Its pathway is phospholipid metabolism; phosphatidylethanolamine biosynthesis. Its function is as follows. Catalyzes the formation of phosphatidylethanolamine (PtdEtn) from phosphatidylserine (PtdSer). Plays a central role in phospholipid metabolism and in the interorganelle trafficking of phosphatidylserine. May be involved in lipid droplet biogenesis at the endoplasmic reticulum membrane. This chain is Phosphatidylserine decarboxylase proenzyme, mitochondrial, found in Pongo abelii (Sumatran orangutan).